Reading from the N-terminus, the 234-residue chain is Ubiquinone biosynthesis O-methyltransferase (234 aa).

Residues arginine 36, glycine 56, aspartate 77, and methionine 125 each contribute to the S-adenosyl-L-methionine site.

The protein belongs to the methyltransferase superfamily. UbiG/COQ3 family.

It carries out the reaction a 3-demethylubiquinol + S-adenosyl-L-methionine = a ubiquinol + S-adenosyl-L-homocysteine + H(+). The catalysed reaction is a 3-(all-trans-polyprenyl)benzene-1,2-diol + S-adenosyl-L-methionine = a 2-methoxy-6-(all-trans-polyprenyl)phenol + S-adenosyl-L-homocysteine + H(+). It functions in the pathway cofactor biosynthesis; ubiquinone biosynthesis. O-methyltransferase that catalyzes the 2 O-methylation steps in the ubiquinone biosynthetic pathway. The chain is Ubiquinone biosynthesis O-methyltransferase from Actinobacillus pleuropneumoniae serotype 5b (strain L20).